A 102-amino-acid chain; its full sequence is Small ribosomal subunit protein uS10 (102 aa).

This sequence belongs to the universal ribosomal protein uS10 family. Part of the 30S ribosomal subunit.

Involved in the binding of tRNA to the ribosomes. The sequence is that of Small ribosomal subunit protein uS10 from Thermococcus kodakarensis (strain ATCC BAA-918 / JCM 12380 / KOD1) (Pyrococcus kodakaraensis (strain KOD1)).